The primary structure comprises 108 residues: Ribonuclease P protein component 4 (108 aa).

Cys60, Cys63, Cys86, and Cys89 together coordinate Zn(2+).

Belongs to the eukaryotic/archaeal RNase P protein component 4 family. Consists of a catalytic RNA component and at least 4-5 protein subunits. The cofactor is Zn(2+).

It is found in the cytoplasm. It catalyses the reaction Endonucleolytic cleavage of RNA, removing 5'-extranucleotides from tRNA precursor.. Its function is as follows. Part of ribonuclease P, a protein complex that generates mature tRNA molecules by cleaving their 5'-ends. The sequence is that of Ribonuclease P protein component 4 from Sulfurisphaera tokodaii (strain DSM 16993 / JCM 10545 / NBRC 100140 / 7) (Sulfolobus tokodaii).